Reading from the N-terminus, the 147-residue chain is MGLSPHLAVTLFCFLICTGNGIHGCNDSPLREIINTLNQVTEKGTPCTEMFVPDVLTATRNTTENELICRASRVLRKFYFPRDVPPCLKNKSGVLGELRKLCRGVSGLNSLRSCTVNESTLTTLKDFLESLKSILRGKYLQSCTSMS.

The N-terminal stretch at Met1–Gly24 is a signal peptide. Cys47 and Cys87 are joined by a disulfide. N-linked (GlcNAc...) asparagine glycans are attached at residues Asn61, Asn90, and Asn117.

This sequence belongs to the IL-4/IL-13 family.

The protein localises to the secreted. In terms of biological role, participates in at least several B-cell activation processes as well as of other cell types. It is a costimulator of DNA-synthesis. It induces the expression of class II MHC molecules on resting B-cells. It enhances both secretion and cell surface expression of IgE and IgG1. It also regulates the expression of the low affinity Fc receptor for IgE (CD23) on both lymphocytes and monocytes. Positively regulates IL31RA expression in macrophages. Stimulates autophagy in dendritic cells by interfering with mTORC1 signaling and through the induction of RUFY4. The sequence is that of Interleukin-4 (Il4) from Rattus norvegicus (Rat).